A 326-amino-acid polypeptide reads, in one-letter code: MATH domain and coiled-coil domain-containing protein At3g58370 (326 aa).

The 127-residue stretch at 7 to 133 (DNKFTWVIKN…NGEVKIVVEI (127 aa)) folds into the MATH domain. The stretch at 259–312 (LRLDWLEKKLAEVKAKKKKVETGKARLQRAEEELQKLNQKCLELKAFLEKENAD) forms a coiled coil.

This chain is MATH domain and coiled-coil domain-containing protein At3g58370, found in Arabidopsis thaliana (Mouse-ear cress).